Here is a 405-residue protein sequence, read N- to C-terminus: Glucose-1-phosphate adenylyltransferase (405 aa).

Alpha-D-glucose 1-phosphate-binding positions include Tyr96, Gly161, 176-177 (EK), and Ser194.

This sequence belongs to the bacterial/plant glucose-1-phosphate adenylyltransferase family. Homotetramer.

It carries out the reaction alpha-D-glucose 1-phosphate + ATP + H(+) = ADP-alpha-D-glucose + diphosphate. The protein operates within glycan biosynthesis; glycogen biosynthesis. Involved in the biosynthesis of ADP-glucose, a building block required for the elongation reactions to produce glycogen. Catalyzes the reaction between ATP and alpha-D-glucose 1-phosphate (G1P) to produce pyrophosphate and ADP-Glc. In Aliivibrio fischeri (strain ATCC 700601 / ES114) (Vibrio fischeri), this protein is Glucose-1-phosphate adenylyltransferase.